The sequence spans 98 residues: Exopolysaccharide production repressor protein (98 aa).

2 helical membrane-spanning segments follow: residues 6-26 (VFLS…YLNG) and 35-55 (TLIC…FLVW). The interval 73–98 (AEAANDEKQPGKVSLRRLNRPHHLNS) is disordered. The segment covering 86–98 (SLRRLNRPHHLNS) has biased composition (basic residues).

It is found in the cell membrane. It participates in glycan metabolism; exopolysaccharide biosynthesis. In terms of biological role, inhibition of exopolysaccharide synthesis (EPS) and nodulation ability (NOD). The polypeptide is Exopolysaccharide production repressor protein (exoX) (Rhizobium meliloti (strain 1021) (Ensifer meliloti)).